The chain runs to 298 residues: Protoheme IX farnesyltransferase (298 aa).

9 helical membrane passes run 16–36 (VVAL…PDMP), 45–65 (ALGF…NQLL), 93–113 (VFAG…VNVI), 114–134 (TAVL…VYLK), 141–161 (IVIG…AVTG), 172–192 (SLLV…LAIF), 223–243 (VLLA…VFYL), 244–264 (GGAI…LNPP), and 277–297 (IVYL…LPWV).

This sequence belongs to the UbiA prenyltransferase family. Protoheme IX farnesyltransferase subfamily.

Its subcellular location is the cell inner membrane. The enzyme catalyses heme b + (2E,6E)-farnesyl diphosphate + H2O = Fe(II)-heme o + diphosphate. It participates in porphyrin-containing compound metabolism; heme O biosynthesis; heme O from protoheme: step 1/1. Functionally, converts heme B (protoheme IX) to heme O by substitution of the vinyl group on carbon 2 of heme B porphyrin ring with a hydroxyethyl farnesyl side group. This is Protoheme IX farnesyltransferase from Xanthomonas euvesicatoria pv. vesicatoria (strain 85-10) (Xanthomonas campestris pv. vesicatoria).